We begin with the raw amino-acid sequence, 102 residues long: ATP-dependent Clp protease adapter protein ClpS (102 aa).

This sequence belongs to the ClpS family. Binds to the N-terminal domain of the chaperone ClpA.

Functionally, involved in the modulation of the specificity of the ClpAP-mediated ATP-dependent protein degradation. The sequence is that of ATP-dependent Clp protease adapter protein ClpS from Shewanella piezotolerans (strain WP3 / JCM 13877).